The following is a 212-amino-acid chain: Imidazole glycerol phosphate synthase subunit HisH (212 aa).

Positions 3–212 (DIAIVDYGMG…LGNFVRWKPV (210 aa)) constitute a Glutamine amidotransferase type-1 domain. Cysteine 82 serves as the catalytic Nucleophile. Catalysis depends on residues histidine 191 and glutamate 193.

Heterodimer of HisH and HisF.

It localises to the cytoplasm. It catalyses the reaction 5-[(5-phospho-1-deoxy-D-ribulos-1-ylimino)methylamino]-1-(5-phospho-beta-D-ribosyl)imidazole-4-carboxamide + L-glutamine = D-erythro-1-(imidazol-4-yl)glycerol 3-phosphate + 5-amino-1-(5-phospho-beta-D-ribosyl)imidazole-4-carboxamide + L-glutamate + H(+). The catalysed reaction is L-glutamine + H2O = L-glutamate + NH4(+). It participates in amino-acid biosynthesis; L-histidine biosynthesis; L-histidine from 5-phospho-alpha-D-ribose 1-diphosphate: step 5/9. Its function is as follows. IGPS catalyzes the conversion of PRFAR and glutamine to IGP, AICAR and glutamate. The HisH subunit catalyzes the hydrolysis of glutamine to glutamate and ammonia as part of the synthesis of IGP and AICAR. The resulting ammonia molecule is channeled to the active site of HisF. This Nitrosospira multiformis (strain ATCC 25196 / NCIMB 11849 / C 71) protein is Imidazole glycerol phosphate synthase subunit HisH.